Here is a 684-residue protein sequence, read N- to C-terminus: Glycine--tRNA ligase beta subunit (684 aa).

Belongs to the class-II aminoacyl-tRNA synthetase family. Tetramer of two alpha and two beta subunits.

The protein resides in the cytoplasm. It catalyses the reaction tRNA(Gly) + glycine + ATP = glycyl-tRNA(Gly) + AMP + diphosphate. The protein is Glycine--tRNA ligase beta subunit of Pseudomonas fluorescens (strain SBW25).